We begin with the raw amino-acid sequence, 164 residues long: MAIPRRSLTELDQNAAGAHFLIVEARYYDSIGAMLLAGAKAALERARASHELVSVPGALEIPIAIEIATDQAKRAGAPFAGAVALGCVIRGETYHFEIVAAESARALMQLAVAHKLPLGNGILTVDTEAQAEERADPDRGDKGGDAARAAVALHCLARRAGALS.

5-amino-6-(D-ribitylamino)uracil is bound by residues tyrosine 27, 58–60 (ALE), and 87–89 (CVI). Residue 92–93 (ET) coordinates (2S)-2-hydroxy-3-oxobutyl phosphate. The active-site Proton donor is histidine 95. Asparagine 120 is a 5-amino-6-(D-ribitylamino)uracil binding site. Arginine 134 is a binding site for (2S)-2-hydroxy-3-oxobutyl phosphate.

It belongs to the DMRL synthase family.

The enzyme catalyses (2S)-2-hydroxy-3-oxobutyl phosphate + 5-amino-6-(D-ribitylamino)uracil = 6,7-dimethyl-8-(1-D-ribityl)lumazine + phosphate + 2 H2O + H(+). The protein operates within cofactor biosynthesis; riboflavin biosynthesis; riboflavin from 2-hydroxy-3-oxobutyl phosphate and 5-amino-6-(D-ribitylamino)uracil: step 1/2. In terms of biological role, catalyzes the formation of 6,7-dimethyl-8-ribityllumazine by condensation of 5-amino-6-(D-ribitylamino)uracil with 3,4-dihydroxy-2-butanone 4-phosphate. This is the penultimate step in the biosynthesis of riboflavin. In Methylocella silvestris (strain DSM 15510 / CIP 108128 / LMG 27833 / NCIMB 13906 / BL2), this protein is 6,7-dimethyl-8-ribityllumazine synthase.